Consider the following 255-residue polypeptide: Poxin (255 aa).

It belongs to the poxin family. Highly divergent.

It catalyses the reaction 2',3'-cGAMP + H2O = Gp(2'-5')Ap(3') + H(+). Its function is as follows. Nuclease that cleaves 2',3'-cGAMP. This is Poxin from Bombyx mori (Silk moth).